Here is a 208-residue protein sequence, read N- to C-terminus: Ribosome maturation factor RimP (208 aa).

The segment at 165–208 (TAQPKKGQRQGKEPAKESGQKKQLAEAAPRSGSKRSERGSEKRK) is disordered. Basic and acidic residues-rich tracts occupy residues 174–188 (QGKE…KKQL) and 198–208 (KRSERGSEKRK).

Belongs to the RimP family.

Its subcellular location is the cytoplasm. Its function is as follows. Required for maturation of 30S ribosomal subunits. This chain is Ribosome maturation factor RimP, found in Sorangium cellulosum (strain So ce56) (Polyangium cellulosum (strain So ce56)).